The following is a 121-amino-acid chain: UPF0344 protein BCE_1257 (121 aa).

The next 4 membrane-spanning stretches (helical) occupy residues 6–26 (ITAWALGLILFFVAYSLYSAG), 38–58 (LMYIFIIVTGFMLYMSIVKTA), 65–85 (WYGLKMLAGILVIGGMEMVLV), and 92–112 (PTGAVWGLFIVALVAVIYLGL).

The protein belongs to the UPF0344 family.

The protein localises to the cell membrane. The polypeptide is UPF0344 protein BCE_1257 (Bacillus cereus (strain ATCC 10987 / NRS 248)).